Here is a 549-residue protein sequence, read N- to C-terminus: Indole-3-acetic acid-amido synthetase GH3.2 (549 aa).

The protein belongs to the IAA-amido conjugating enzyme family. As to expression, expressed in flowers, pollen, cotyledons, stipules, true leaves, hypocotyls, and all parts of the roots except for the primary root tips.

Catalyzes the synthesis of indole-3-acetic acid (IAA)-amino acid conjugates, providing a mechanism for the plant to cope with the presence of excess auxin. Strongly reactive with Glu, Gln, Trp, Asp, Ala, Leu, Phe, Gly, Tyr, Met, Ile and Val. Little or no product formation with His, Ser, Thr, Arg, Lys, or Cys. Also active on pyruvic and butyric acid analogs of IAA, PAA and the synthetic auxin naphthaleneacetic acid (NAA). The two chlorinated synthetic auxin herbicides 2,4-D and 3,6-dichloro-o-anisic acid (dicamba) cannot be used as substrates. The sequence is that of Indole-3-acetic acid-amido synthetase GH3.2 (GH3.2) from Arabidopsis thaliana (Mouse-ear cress).